A 460-amino-acid chain; its full sequence is Chromosomal replication initiator protein DnaA 2 (460 aa).

A domain I, interacts with DnaA modulators region spans residues 1–68 (MRAWEDFLLL…KTSLVNNNGK (68 aa)). Residues 68 to 102 (KLIRVHITSLDKTAPFYKEKQIQQEKTAYFTMQYG) are domain II. The tract at residues 103–321 (NVNPEMTFGN…DALKLLSKRV (219 aa)) is domain III, AAA+ region. 4 residues coordinate ATP: Gly-151, Gly-153, Lys-154, and Thr-155. The domain IV, binds dsDNA stretch occupies residues 322 to 460 (AYKKLAQQLL…EFFPEEEISC (139 aa)).

It belongs to the DnaA family. Oligomerizes as a right-handed, spiral filament on DNA at oriC.

The protein resides in the cytoplasm. Its function is as follows. Plays an essential role in the initiation and regulation of chromosomal replication. ATP-DnaA binds to the origin of replication (oriC) to initiate formation of the DNA replication initiation complex once per cell cycle. Binds the DnaA box (a 9 base pair repeat at the origin) and separates the double-stranded (ds)DNA. Forms a right-handed helical filament on oriC DNA; dsDNA binds to the exterior of the filament while single-stranded (ss)DNA is stabiized in the filament's interior. The ATP-DnaA-oriC complex binds and stabilizes one strand of the AT-rich DNA unwinding element (DUE), permitting loading of DNA polymerase. After initiation quickly degrades to an ADP-DnaA complex that is not apt for DNA replication. Binds acidic phospholipids. This Chlamydia caviae (strain ATCC VR-813 / DSM 19441 / 03DC25 / GPIC) (Chlamydophila caviae) protein is Chromosomal replication initiator protein DnaA 2.